A 636-amino-acid polypeptide reads, in one-letter code: 3-phosphoinositide-dependent protein kinase 1 (636 aa).

Composition is skewed to low complexity over residues 1-20 (MEDL…NNDT) and 27-37 (APTTLNLTPTA). Residues 1–45 (MEDLTPTNTSLDTTTTNNDTTSDREAAPTTLNLTPTASESENSLS) form a disordered region. One can recognise a Protein kinase domain in the interval 69-364 (FMFLQSMGEG…SQELMAHKFF (296 aa)). ATP-binding positions include 79–81 (AYS) and Lys98. Residues 100–149 (LQKSYLNRHQKMDAIIREKNILTYLSQECGGHPFVTQLYTHFHDQARIYF) form a PIF-pocket region. ATP is bound by residues 152–154 (GLV) and Asp158. Catalysis depends on Asp197, which acts as the Proton acceptor. ATP is bound by residues Asp201 and Asp215. 2 disordered regions span residues 233 to 264 (TDAN…EENT) and 593 to 636 (KKSR…KKSP). The stretch at 550-631 (DLEKKADEWC…QVSKKLSMQM (82 aa)) forms a coiled coil. The segment covering 597-624 (KEMMREQKALRRKQEKEEKKALKAEQVS) has biased composition (basic and acidic residues).

The protein belongs to the protein kinase superfamily. AGC Ser/Thr protein kinase family. PDPK1 subfamily. Interacts directly with sgk-1, akt-1 and akt-2.

It localises to the cytoplasm. The catalysed reaction is L-seryl-[protein] + ATP = O-phospho-L-seryl-[protein] + ADP + H(+). It catalyses the reaction L-threonyl-[protein] + ATP = O-phospho-L-threonyl-[protein] + ADP + H(+). In terms of biological role, involved in the daf-2/insulin receptor-like transduction pathway, which controls longevity and prevents developmental arrest at the dauer stage. Phosphorylates and activates sgk-1, akt-1 and akt-2. The chain is 3-phosphoinositide-dependent protein kinase 1 from Caenorhabditis elegans.